The chain runs to 399 residues: F-box/kelch-repeat protein At5g48980 (399 aa).

The span at 1 to 11 shows a compositional bias: polar residues; sequence MADSQRLSTAS. Residues 1 to 29 form a disordered region; it reads MADSQRLSTASGVKDGQPPWKKKKLSNDT. The F-box domain occupies 29 to 75; it reads TTSNPSLPYDVILIILARVSRSYYTNLSLVSKSFRSILTSPELYKTR. The Kelch repeat unit spans residues 199–248; the sequence is IVYLPGSFESPDSLNCVEVYNTMTQTWKPVPPEKRMFKLENLEKKIYYKS.

This chain is F-box/kelch-repeat protein At5g48980, found in Arabidopsis thaliana (Mouse-ear cress).